The primary structure comprises 357 residues: sn-glycerol-3-phosphate import ATP-binding protein UgpC (357 aa).

The region spanning 4 to 235 (LKLQAVTKSY…PASLFVASFI (232 aa)) is the ABC transporter domain. 37–44 (GPSGCGKS) serves as a coordination point for ATP.

Belongs to the ABC transporter superfamily. sn-glycerol-3-phosphate importer (TC 3.A.1.1.3) family. The complex is composed of two ATP-binding proteins (UgpC), two transmembrane proteins (UgpA and UgpE) and a solute-binding protein (UgpB).

The protein resides in the cell inner membrane. It catalyses the reaction sn-glycerol 3-phosphate(out) + ATP + H2O = sn-glycerol 3-phosphate(in) + ADP + phosphate + H(+). Part of the ABC transporter complex UgpBAEC involved in sn-glycerol-3-phosphate (G3P) import. Responsible for energy coupling to the transport system. The chain is sn-glycerol-3-phosphate import ATP-binding protein UgpC from Yersinia pseudotuberculosis serotype I (strain IP32953).